The chain runs to 43 residues: RGVCSTPEGSCVHNGCICQNAPCCHESGCNWANVCPGFLWDKN.

A propeptide is located at residue Arg1. Disulfide bonds link Cys4–Cys16, Cys11–Cys24, Cys18–Cys29, and Cys23–Cys35. Trp31 carries the 6'-bromotryptophan modification. 4-hydroxyproline is present on Pro36. Residue Trp40 is modified to 6'-bromotryptophan.

As to expression, expressed by the venom duct.

The protein localises to the secreted. Functionally, mu-conotoxins block voltage-gated sodium channels. This toxin reversibly blocks voltage-gated sodium channel in cephalopods, with no alteration in the voltage dependence of sodium conductance or on the kinetics of inactivation. The protein is Mu-conotoxin-like CalTx 12.2.1E of Californiconus californicus (California cone).